A 200-amino-acid polypeptide reads, in one-letter code: Dephospho-CoA kinase (200 aa).

The 198-residue stretch at Arg-3–Asn-200 folds into the DPCK domain. Gly-11 to Thr-16 is an ATP binding site.

Belongs to the CoaE family.

It localises to the cytoplasm. It carries out the reaction 3'-dephospho-CoA + ATP = ADP + CoA + H(+). It participates in cofactor biosynthesis; coenzyme A biosynthesis; CoA from (R)-pantothenate: step 5/5. Catalyzes the phosphorylation of the 3'-hydroxyl group of dephosphocoenzyme A to form coenzyme A. This is Dephospho-CoA kinase from Corynebacterium glutamicum (strain ATCC 13032 / DSM 20300 / JCM 1318 / BCRC 11384 / CCUG 27702 / LMG 3730 / NBRC 12168 / NCIMB 10025 / NRRL B-2784 / 534).